The sequence spans 225 residues: Transmembrane protein C16orf54 homolog (225 aa).

The chain crosses the membrane as a helical span at residues 32–52; the sequence is PCIPIMLGLASLTAFFIITTA. Disordered regions lie at residues 106-163 and 178-200; these read DRAP…ERPH and EAGL…EPDW. Phosphothreonine is present on residues Thr113 and Thr117. The span at 122 to 140 shows a compositional bias: low complexity; the sequence is ATAPPATSAPYSSLSSLVP. The residue at position 195 (Ser195) is a Phosphoserine.

It is found in the membrane. This Mus musculus (Mouse) protein is Transmembrane protein C16orf54 homolog.